Consider the following 348-residue polypeptide: 5-deoxyribose 1-phosphate isomerase (348 aa).

Substrate is bound by residues 49 to 51 (RGA), R92, and Q199. D240 serves as the catalytic Proton donor. A substrate-binding site is contributed by 250–251 (NK).

The protein belongs to the EIF-2B alpha/beta/delta subunits family. DrdI subfamily. In terms of assembly, homodimer.

The enzyme catalyses 5-deoxy-alpha-D-ribose 1-phosphate = 5-deoxy-D-ribulose 1-phosphate. The catalysed reaction is 5-(methylsulfanyl)-alpha-D-ribose 1-phosphate = 5-(methylsulfanyl)-D-ribulose 1-phosphate. Its pathway is carbohydrate degradation. Functionally, catalyzes the isomerization of 5-deoxy-alpha-D-ribose 1-phosphate to 5-deoxy-D-ribulose 1-phosphate, as part of a 5-deoxyribose salvage pathway that recycles this toxic radical SAM enzyme by-product to mainstream metabolites. Also seems to be able to catalyze the conversion of methylthioribose-1-phosphate (MTR-1-P) into methylthioribulose-1-phosphate (MTRu-1-P). However this enzyme may not function in methionine salvage in B.thuringiensis since it exists a paralog (MtnA) present in the methionine salvage pathway cluster. The sequence is that of 5-deoxyribose 1-phosphate isomerase from Bacillus thuringiensis serovar kurstaki (strain ATCC 35866 / NRRL B-4488 / HD73).